We begin with the raw amino-acid sequence, 479 residues long: Signal recognition particle subunit SRP54 1 (479 aa).

The G-domain stretch occupies residues 1–295 (MVLAELGGRI…DVKPFVSRLL (295 aa)). GTP-binding positions include 108 to 115 (GLQGAGKT), 190 to 194 (DTSGR), and 248 to 251 (TKMD). The tract at residues 296-479 (GKGDWSGLVD…MMGMFGGGGK (184 aa)) is M-domain.

It belongs to the GTP-binding SRP family. SRP54 subfamily. As to quaternary structure, component of a signal recognition particle (SRP) complex that consists of a 7SL RNA molecule of 300 nucleotides and six protein subunits: SRP72, SRP68, SRP54, SRP19, SRP14 and SRP9.

It localises to the cytoplasm. Its subcellular location is the endoplasmic reticulum. The catalysed reaction is GTP + H2O = GDP + phosphate + H(+). Functionally, component of the signal recognition particle (SRP) complex, a ribonucleoprotein complex that mediates the cotranslational targeting of secretory and membrane proteins to the endoplasmic reticulum (ER). As part of the SRP complex, associates with the SRP receptor (SR) component SRPRA to target secretory proteins to the endoplasmic reticulum membrane. Binds to the signal sequence of presecretory proteins when they emerge from the ribosomes. Displays basal GTPase activity, and stimulates reciprocal GTPase activation of the SR subunit SRPRA. Forms a guanosine 5'-triphosphate (GTP)-dependent complex with the SR subunit SRPRA. SR compaction and GTPase mediated rearrangement of SR drive SRP-mediated cotranslational protein translocation into the ER. Requires the presence of SRP9/SRP14 and/or SRP19 to stably interact with RNA. In Arabidopsis thaliana (Mouse-ear cress), this protein is Signal recognition particle subunit SRP54 1 (SRP-54A).